A 273-amino-acid chain; its full sequence is Undecaprenyl-diphosphatase (273 aa).

7 helical membrane-spanning segments follow: residues 39-59 (SGLT…VVYF), 86-106 (LPFL…LFET), 117-137 (LLIG…DLFG), 146-166 (VTVS…IPGV), 189-209 (FSFL…MLHL), 220-240 (LPLA…VAFL), and 249-269 (IAPF…VILT).

It belongs to the UppP family.

It is found in the cell inner membrane. The enzyme catalyses di-trans,octa-cis-undecaprenyl diphosphate + H2O = di-trans,octa-cis-undecaprenyl phosphate + phosphate + H(+). Its function is as follows. Catalyzes the dephosphorylation of undecaprenyl diphosphate (UPP). Confers resistance to bacitracin. The sequence is that of Undecaprenyl-diphosphatase from Pelobacter propionicus (strain DSM 2379 / NBRC 103807 / OttBd1).